The sequence spans 72 residues: Translation initiation factor IF-1 (72 aa).

Residues 1–72 (MAKEELLEFP…TKGRINYRFK (72 aa)) form the S1-like domain.

Belongs to the IF-1 family. Component of the 30S ribosomal translation pre-initiation complex which assembles on the 30S ribosome in the order IF-2 and IF-3, IF-1 and N-formylmethionyl-tRNA(fMet); mRNA recruitment can occur at any time during PIC assembly.

It is found in the cytoplasm. One of the essential components for the initiation of protein synthesis. Stabilizes the binding of IF-2 and IF-3 on the 30S subunit to which N-formylmethionyl-tRNA(fMet) subsequently binds. Helps modulate mRNA selection, yielding the 30S pre-initiation complex (PIC). Upon addition of the 50S ribosomal subunit IF-1, IF-2 and IF-3 are released leaving the mature 70S translation initiation complex. The chain is Translation initiation factor IF-1 from Dinoroseobacter shibae (strain DSM 16493 / NCIMB 14021 / DFL 12).